The following is a 392-amino-acid chain: Imidazolonepropionase (392 aa).

2 residues coordinate Fe(3+): histidine 70 and histidine 72. 2 residues coordinate Zn(2+): histidine 70 and histidine 72. Positions 79, 137, and 164 each coordinate 4-imidazolone-5-propanoate. Tyrosine 137 is a binding site for N-formimidoyl-L-glutamate. Fe(3+) is bound at residue histidine 227. Zn(2+) is bound at residue histidine 227. 4-imidazolone-5-propanoate is bound at residue glutamine 230. Aspartate 301 contributes to the Fe(3+) binding site. Aspartate 301 contributes to the Zn(2+) binding site. N-formimidoyl-L-glutamate contacts are provided by asparagine 303 and glycine 305. Residue threonine 306 participates in 4-imidazolone-5-propanoate binding.

Belongs to the metallo-dependent hydrolases superfamily. HutI family. Zn(2+) is required as a cofactor. It depends on Fe(3+) as a cofactor.

It is found in the cytoplasm. The enzyme catalyses 4-imidazolone-5-propanoate + H2O = N-formimidoyl-L-glutamate. Its pathway is amino-acid degradation; L-histidine degradation into L-glutamate; N-formimidoyl-L-glutamate from L-histidine: step 3/3. Catalyzes the hydrolytic cleavage of the carbon-nitrogen bond in imidazolone-5-propanoate to yield N-formimidoyl-L-glutamate. It is the third step in the universal histidine degradation pathway. The sequence is that of Imidazolonepropionase from Nocardia farcinica (strain IFM 10152).